A 943-amino-acid polypeptide reads, in one-letter code: Lysine-specific demethylase JMJ21 (943 aa).

The 47-residue stretch at Leu-14 to Leu-60 folds into the F-box domain. A JmjC domain is found at Glu-216–Tyr-379. Residues His-262, Asp-264, and His-347 each contribute to the Fe cation site. The span at Asn-396–Asn-410 shows a compositional bias: acidic residues. The interval Asn-396–Asp-438 is disordered.

Belongs to the JARID1 histone demethylase family. It depends on Fe(2+) as a cofactor. As to expression, mostly expressed in leaves, and, to a lower extent, in inflorescences, roots, siliques and stems.

It localises to the nucleus. In terms of biological role, may function as histone H3 lysine demethylase and be involved in regulation of gene expression. This chain is Lysine-specific demethylase JMJ21, found in Arabidopsis thaliana (Mouse-ear cress).